The chain runs to 520 residues: MSSKCDVVVVGGGISGMAAAKLLHDSGLNVIVLEARDRVGGRTYTLRNQKVKYVDLGGSYVGPTQNHILRLSKELGLETYKVNEVERLIHHTKGKSYPFRGSFPSVWNPITYLDHNNLWRTMDDMGREIPSDAPWKAPLAEQWDLMTMKELLDKICWTESSKQLAILFVNLCVTAEIHEVSALWFLWYVKQCGGTTRIFSTSNGGQERKFVGGSGQVSERIMDLLGDRVKLERPVIHIDQTGENVLVETLNHELYEAKYVISAVPPVLGMKIHFNPPLPMMRNQLITRVPLGSVIKSIVYYKEPFWRNMDYCGSMIIEGEEAPVAYALDDTKPDGSYPAIIGFILAHKARKLARLTKEERLKKLCDLYAKVLGSQEALHPVHYEEKNWCEEQYSGGCYTSYFPPGIMTQYGRVLRQPVGRIYFAGTETATHWSGYMEGAVEAGERAAREILHAMGKIPEDEIWLPEPESVDVPAKPITTTFLQRHLPSVPGLLKLIGLTTIFSATALGFLAHKRGLLVRI.

Ser-2 carries the post-translational modification N-acetylserine. Topologically, residues 2–489 (SSKCDVVVVG…TFLQRHLPSV (488 aa)) are cytoplasmic. Residue Lys-52 is modified to N6-acetyllysine. Cys-397 is subject to S-8alpha-FAD cysteine. A helical; Anchor for type IV membrane protein membrane pass occupies residues 490–516 (PGLLKLIGLTTIFSATALGFLAHKRGL). Residues 517-520 (LVRI) lie on the Mitochondrial intermembrane side of the membrane.

Monomer, homo- or heterodimer (containing two subunits of similar size). Each subunit contains a covalently bound flavin. Enzymatically active as monomer. FAD serves as cofactor.

Its subcellular location is the mitochondrion outer membrane. It carries out the reaction a secondary aliphatic amine + O2 + H2O = a primary amine + an aldehyde + H2O2. It catalyses the reaction a primary methyl amine + O2 + H2O = an aldehyde + H2O2 + NH4(+). The catalysed reaction is benzylamine + O2 + H2O = benzaldehyde + H2O2 + NH4(+). The enzyme catalyses (R)-adrenaline + O2 + H2O = (R)-3,4-dihydroxymandelaldehyde + methylamine + H2O2. It carries out the reaction dopamine + O2 + H2O = 3,4-dihydroxyphenylacetaldehyde + H2O2 + NH4(+). It catalyses the reaction tyramine + O2 + H2O = (4-hydroxyphenyl)acetaldehyde + H2O2 + NH4(+). The catalysed reaction is (R)-noradrenaline + O2 + H2O = (R)-3,4-dihydroxymandelaldehyde + H2O2 + NH4(+). The enzyme catalyses 2-phenylethylamine + O2 + H2O = 2-phenylacetaldehyde + H2O2 + NH4(+). It carries out the reaction N-acetylputrescine + O2 + H2O = 4-acetamidobutanal + H2O2 + NH4(+). Functionally, catalyzes the oxidative deamination of primary and some secondary amines such as neurotransmitters, and exogenous amines including the tertiary amine, neurotoxin 1-methyl-4-phenyl-1,2,3,6-tetrahydropyridine (MPTP), with concomitant reduction of oxygen to hydrogen peroxide and participates in the metabolism of neuroactive and vasoactive amines in the central nervous system and peripheral tissues. Preferentially degrades benzylamine and phenylethylamine. This Bos taurus (Bovine) protein is Amine oxidase [flavin-containing] B.